Consider the following 764-residue polypeptide: 5-methyltetrahydropteroyltriglutamate--homocysteine methyltransferase (764 aa).

Residues 16–19 (RELK) and lysine 121 contribute to the 5-methyltetrahydropteroyltri-L-glutamate site. Residues 440 to 442 (IGS) and glutamate 493 each bind L-homocysteine. L-methionine is bound by residues 440 to 442 (IGS) and glutamate 493. Residues 524–525 (RC) and tryptophan 570 each bind 5-methyltetrahydropteroyltri-L-glutamate. L-homocysteine is bound at residue aspartate 608. Aspartate 608 serves as a coordination point for L-methionine. Glutamate 614 is a 5-methyltetrahydropteroyltri-L-glutamate binding site. The Zn(2+) site is built by histidine 650, cysteine 652, and glutamate 674. Histidine 703 functions as the Proton donor in the catalytic mechanism. Residue cysteine 735 coordinates Zn(2+).

The protein belongs to the vitamin-B12 independent methionine synthase family. It depends on Zn(2+) as a cofactor.

It carries out the reaction 5-methyltetrahydropteroyltri-L-glutamate + L-homocysteine = tetrahydropteroyltri-L-glutamate + L-methionine. The protein operates within amino-acid biosynthesis; L-methionine biosynthesis via de novo pathway; L-methionine from L-homocysteine (MetE route): step 1/1. In terms of biological role, catalyzes the transfer of a methyl group from 5-methyltetrahydrofolate to homocysteine resulting in methionine formation. This Burkholderia cenocepacia (strain ATCC BAA-245 / DSM 16553 / LMG 16656 / NCTC 13227 / J2315 / CF5610) (Burkholderia cepacia (strain J2315)) protein is 5-methyltetrahydropteroyltriglutamate--homocysteine methyltransferase.